Consider the following 285-residue polypeptide: MLYLTKIRNAESEFTENEQKIADFLRANVSELKSVSSRKMAKQLGISQSSIVKFAQKLGAQGFTELRMALIGEYSASREKTNATAQHLHSSITSDDSLEVIARKLNREKELALEQTCALFDYARLQKIIEVISKAPFIQITGLGGSALVGCDLSFKLMKIGYRVACEADTHVQATVSQALKKGDVQIAISYSGSKKEIVLCAEAARKQGATVIAITSLADSPLRRLAHFTLDTVSGETEWRSSSMSTRTAQNSVTDLLFVGLVQLNDVESLKMIQRSSELTQRLK.

Residues 1–77 (MLYLTKIRNA…MALIGEYSAS (77 aa)) form the HTH rpiR-type domain. Residues 37 to 56 (SRKMAKQLGISQSSIVKFAQ) constitute a DNA-binding region (H-T-H motif). Residues 128-268 (IIEVISKAPF…FVGLVQLNDV (141 aa)) enclose the SIS domain.

As to quaternary structure, homotetramer.

It functions in the pathway amino-sugar metabolism; N-acetylmuramate degradation [regulation]. Functionally, represses the expression of the murPQ operon involved in the uptake and degradation of N-acetylmuramic acid (MurNAc). Binds to two adjacent inverted repeats within the operator region. MurNAc 6-phosphate, the substrate of MurQ, is the specific inducer that weakens binding of MurR to the operator. The sequence is that of HTH-type transcriptional regulator MurR from Escherichia coli O157:H7.